The following is a 446-amino-acid chain: Glutamate--tRNA ligase 2 (446 aa).

The 'HIGH' region signature appears at 8 to 18 (PSPTGYLHIGN). Residues 239–243 (GLSKR) carry the 'KMSKS' region motif. An ATP-binding site is contributed by Lys242.

The protein belongs to the class-I aminoacyl-tRNA synthetase family. Glutamate--tRNA ligase type 1 subfamily. Monomer.

It localises to the cytoplasm. The enzyme catalyses tRNA(Glu) + L-glutamate + ATP = L-glutamyl-tRNA(Glu) + AMP + diphosphate. Catalyzes the attachment of glutamate to tRNA(Glu) in a two-step reaction: glutamate is first activated by ATP to form Glu-AMP and then transferred to the acceptor end of tRNA(Glu). This is Glutamate--tRNA ligase 2 from Methylobacterium radiotolerans (strain ATCC 27329 / DSM 1819 / JCM 2831 / NBRC 15690 / NCIMB 10815 / 0-1).